The primary structure comprises 46 residues: Major cold shock protein (46 aa).

The region spanning 1–46 is the CSD domain; sequence DKGFGFITPADGSKDVFVHFSAIQSNDFKTLDEGQKVEFSIENGAK.

In terms of assembly, homodimer.

Its subcellular location is the cytoplasm. The chain is Major cold shock protein (cspA) from Yersinia enterocolitica.